Here is a 404-residue protein sequence, read N- to C-terminus: Major outer membrane porin (404 aa).

The signal sequence occupies residues 1–22 (MKKLLKSVLAFAVLGSASSLHA). Positions 85–110 (GPVPTTTDTDAAADITTSTPRENPAY) are disordered. Over residues 89-103 (TTTDTDAAADITTST) the composition is skewed to low complexity.

This sequence belongs to the chlamydial porin (CP) (TC 1.B.2) family. As to quaternary structure, part of a disulfide cross-linked outer membrane complex (COMC) composed of the major outer membrane porin (MOMP), the small cysteine-rich protein (OmcA) and the large cysteine-rich periplasmic protein (OmcB).

It is found in the cell outer membrane. Functionally, in elementary bodies (EBs, the infectious stage, which is able to survive outside the host cell) provides the structural integrity of the outer envelope through disulfide cross-links with the small cysteine-rich protein and the large cysteine-rich periplasmic protein. It has been described in publications as the Sarkosyl-insoluble COMC (Chlamydia outer membrane complex), and serves as the functional equivalent of peptidoglycan. In terms of biological role, permits diffusion of specific solutes through the outer membrane. The sequence is that of Major outer membrane porin (ompA) from Chlamydia muridarum.